A 560-amino-acid chain; its full sequence is Mannosyl-oligosaccharide 1,2-alpha-mannosidase MNS1 (560 aa).

At 1–27 the chain is on the cytoplasmic side; that stretch reads MARSRSISGYGIWKYLNPAYYLRRPRR. The chain crosses the membrane as a helical; Signal-anchor for type II membrane protein span at residues 28 to 47; that stretch reads LALLFIVFVSVSMLVWDRIN. Residues 47 to 80 are a coiled coil; that stretch reads NLAREHEVEVFKLNEEVSRLEQMLEELNGGVGNK. Residues 48-560 are Lumenal-facing; the sequence is LAREHEVEVF…QRKFGHQINV (513 aa). The active-site Proton donor is the glutamate 179. Residue aspartate 312 is part of the active site. N-linked (GlcNAc...) asparagine glycosylation occurs at asparagine 326. Cysteine 377 and cysteine 409 form a disulfide bridge. Glutamate 423 (proton donor) is an active-site residue. Glutamate 445 is a catalytic residue. N-linked (GlcNAc...) asparagine glycosylation occurs at asparagine 459. Threonine 529 serves as a coordination point for Ca(2+).

It belongs to the glycosyl hydrolase 47 family. It depends on Ca(2+) as a cofactor. Mn(2+) serves as cofactor. Mg(2+) is required as a cofactor. As to expression, expressed in flowers, siliques, stems, leaves, roots, pollen grains, shoot apical meristems, hypocotyls and upper region of the root.

It is found in the golgi apparatus membrane. The enzyme catalyses N(4)-(alpha-D-Man-(1-&gt;2)-alpha-D-Man-(1-&gt;2)-alpha-D-Man-(1-&gt;3)-[alpha-D-Man-(1-&gt;2)-alpha-D-Man-(1-&gt;3)-[alpha-D-Man-(1-&gt;2)-alpha-D-Man-(1-&gt;6)]-alpha-D-Man-(1-&gt;6)]-beta-D-Man-(1-&gt;4)-beta-D-GlcNAc-(1-&gt;4)-beta-D-GlcNAc)-L-asparaginyl-[protein] (N-glucan mannose isomer 9A1,2,3B1,2,3) + 4 H2O = N(4)-(alpha-D-Man-(1-&gt;3)-[alpha-D-Man-(1-&gt;3)-[alpha-D-Man-(1-&gt;6)]-alpha-D-Man-(1-&gt;6)]-beta-D-Man-(1-&gt;4)-beta-D-GlcNAc-(1-&gt;4)-beta-D-GlcNAc)-L-asparaginyl-[protein] (N-glucan mannose isomer 5A1,2) + 4 beta-D-mannose. It carries out the reaction N(4)-(alpha-D-Man-(1-&gt;2)-alpha-D-Man-(1-&gt;2)-alpha-D-Man-(1-&gt;3)-[alpha-D-Man-(1-&gt;3)-[alpha-D-Man-(1-&gt;2)-alpha-D-Man-(1-&gt;6)]-alpha-D-Man-(1-&gt;6)]-beta-D-Man-(1-&gt;4)-beta-D-GlcNAc-(1-&gt;4)-beta-D-GlcNAc)-L-asparaginyl-[protein] (N-glucan mannose isomer 8A1,2,3B1,3) + 3 H2O = N(4)-(alpha-D-Man-(1-&gt;3)-[alpha-D-Man-(1-&gt;3)-[alpha-D-Man-(1-&gt;6)]-alpha-D-Man-(1-&gt;6)]-beta-D-Man-(1-&gt;4)-beta-D-GlcNAc-(1-&gt;4)-beta-D-GlcNAc)-L-asparaginyl-[protein] (N-glucan mannose isomer 5A1,2) + 3 beta-D-mannose. It catalyses the reaction N(4)-(alpha-D-Man-(1-&gt;2)-alpha-D-Man-(1-&gt;2)-alpha-D-Man-(1-&gt;3)-[alpha-D-Man-(1-&gt;2)-alpha-D-Man-(1-&gt;3)-[alpha-D-Man-(1-&gt;2)-alpha-D-Man-(1-&gt;6)]-alpha-D-Man-(1-&gt;6)]-beta-D-Man-(1-&gt;4)-beta-D-GlcNAc-(1-&gt;4)-beta-D-GlcNAc)-L-asparaginyl-[protein] (N-glucan mannose isomer 9A1,2,3B1,2,3) + H2O = N(4)-(alpha-D-Man-(1-&gt;2)-alpha-D-Man-(1-&gt;2)-alpha-D-Man-(1-&gt;3)-[alpha-D-Man-(1-&gt;3)-[alpha-D-Man-(1-&gt;2)-alpha-D-Man-(1-&gt;6)]-alpha-D-Man-(1-&gt;6)]-beta-D-Man-(1-&gt;4)-beta-D-GlcNAc-(1-&gt;4)-beta-D-GlcNAc)-L-asparaginyl-[protein] (N-glucan mannose isomer 8A1,2,3B1,3) + beta-D-mannose. The protein operates within protein modification; protein glycosylation. Inhibited by kifunensine and 1-deoxymannojirimycin, but not by swainsonine. Class I alpha-mannosidase essential for early N-glycan processing. Progressively trims alpha-1,2-linked mannose residues. Produces Man(5)GlcNAc(2) from Man(8)GlcNAc(2), but only Man(6)GlcNAc(2) from Man(9)GlcNAc(2). Has difficulty acting on the terminal mannose of the b-branch. Involved in root development and cell wall biosynthesis. In Arabidopsis thaliana (Mouse-ear cress), this protein is Mannosyl-oligosaccharide 1,2-alpha-mannosidase MNS1 (MNS1).